The primary structure comprises 340 residues: Glyceraldehyde-3-phosphate dehydrogenase (340 aa).

Residues 11–12 (TI) and glycine 109 contribute to the NAD(+) site. Cysteine 123 and cysteine 149 are joined by a disulfide. D-glyceraldehyde 3-phosphate is bound at residue 138–140 (SCN). Residue cysteine 139 is the Nucleophile of the active site. Arginine 167 provides a ligand contact to NAD(+). Residue 193 to 194 (HA) coordinates D-glyceraldehyde 3-phosphate. Residue glutamine 300 coordinates NAD(+).

The protein belongs to the glyceraldehyde-3-phosphate dehydrogenase family. As to quaternary structure, homotetramer.

It localises to the cytoplasm. The catalysed reaction is D-glyceraldehyde 3-phosphate + phosphate + NADP(+) = (2R)-3-phospho-glyceroyl phosphate + NADPH + H(+). It catalyses the reaction D-glyceraldehyde 3-phosphate + phosphate + NAD(+) = (2R)-3-phospho-glyceroyl phosphate + NADH + H(+). The protein operates within carbohydrate degradation; glycolysis; pyruvate from D-glyceraldehyde 3-phosphate: step 1/5. In terms of biological role, can use both NAD and NADP as cofactors, but exhibits a marked preference for NADP. The sequence is that of Glyceraldehyde-3-phosphate dehydrogenase (gap) from Saccharolobus solfataricus (strain ATCC 35092 / DSM 1617 / JCM 11322 / P2) (Sulfolobus solfataricus).